The primary structure comprises 111 residues: Cytochrome c (111 aa).

The residue at position 1 (A1) is an N-acetylalanine. Positions 22, 25, and 26 each coordinate heme c. K80 carries the post-translational modification N6,N6,N6-trimethyllysine. Residue M88 participates in heme c binding. K94 is subject to N6,N6,N6-trimethyllysine.

It belongs to the cytochrome c family. Post-translationally, binds 1 heme c group covalently per subunit.

Its subcellular location is the mitochondrion intermembrane space. In terms of biological role, electron carrier protein. The oxidized form of the cytochrome c heme group can accept an electron from the heme group of the cytochrome c1 subunit of cytochrome reductase. Cytochrome c then transfers this electron to the cytochrome oxidase complex, the final protein carrier in the mitochondrial electron-transport chain. The protein is Cytochrome c of Vigna radiata var. radiata (Mung bean).